We begin with the raw amino-acid sequence, 297 residues long: CASP-like protein 4A2 (297 aa).

Positions methionine 1–alanine 136 are disordered. Over methionine 1–threonine 149 the chain is Cytoplasmic. The segment covering serine 8–serine 19 has biased composition (low complexity). Positions leucine 69 to proline 83 are enriched in pro residues. The segment covering methionine 93–arginine 121 has biased composition (polar residues). Residues alanine 150–alanine 170 traverse the membrane as a helical segment. Topologically, residues aspartate 171 to tyrosine 189 are extracellular. The helical transmembrane segment at cysteine 190–cysteine 210 threads the bilayer. Topologically, residues tyrosine 211–aspartate 225 are cytoplasmic. Residues leucine 226–alanine 246 form a helical membrane-spanning segment. The Extracellular portion of the chain corresponds to alanine 247–methionine 265. A helical membrane pass occupies residues alanine 266 to isoleucine 286. Residues serine 287–serine 297 lie on the Cytoplasmic side of the membrane.

This sequence belongs to the Casparian strip membrane proteins (CASP) family. In terms of assembly, homodimer and heterodimers.

Its subcellular location is the cell membrane. This is CASP-like protein 4A2 from Arabidopsis lyrata subsp. lyrata (Lyre-leaved rock-cress).